The following is a 341-amino-acid chain: tRNA N6-adenosine threonylcarbamoyltransferase (341 aa).

The Fe cation site is built by H111 and H115. Substrate-binding positions include 134–138 (LVSGG), D167, G180, and N276. D304 contributes to the Fe cation binding site.

It belongs to the KAE1 / TsaD family. Requires Fe(2+) as cofactor.

It localises to the cytoplasm. It carries out the reaction L-threonylcarbamoyladenylate + adenosine(37) in tRNA = N(6)-L-threonylcarbamoyladenosine(37) in tRNA + AMP + H(+). Required for the formation of a threonylcarbamoyl group on adenosine at position 37 (t(6)A37) in tRNAs that read codons beginning with adenine. Is involved in the transfer of the threonylcarbamoyl moiety of threonylcarbamoyl-AMP (TC-AMP) to the N6 group of A37, together with TsaE and TsaB. TsaD likely plays a direct catalytic role in this reaction. The chain is tRNA N6-adenosine threonylcarbamoyltransferase from Pseudomonas fluorescens (strain Pf0-1).